The following is a 212-amino-acid chain: uncharacterized protein (212 aa).

A helical transmembrane segment spans residues 11–31; the sequence is NLIFFQFIVYFFFISLTILII.

Its subcellular location is the membrane. This is an uncharacterized protein from Rickettsia prowazekii (strain Madrid E).